The following is a 472-amino-acid chain: Flap endonuclease 1 (472 aa).

The N-domain stretch occupies residues 1–106 (MGIKGLARFL…EELMKRKERR (106 aa)). Asp-34 provides a ligand contact to Mg(2+). DNA contacts are provided by Arg-47 and Arg-72. Residues Asp-88, Glu-160, Glu-162, Asp-181, and Asp-183 each coordinate Mg(2+). Residues 124-263 (TIRKQLIRTI…LTAYKLLKKH (140 aa)) are I-domain. Position 160 (Glu-160) interacts with DNA. DNA is bound by residues Gly-241 and Asp-243. Asp-243 contacts Mg(2+). Positions 348–356 (AQTSLDSFF) are interaction with PCNA.

Belongs to the XPG/RAD2 endonuclease family. FEN1 subfamily. Interacts with PCNA. Three molecules of FEN1 bind to one PCNA trimer with each molecule binding to one PCNA monomer. PCNA stimulates the nuclease activity without altering cleavage specificity. The cofactor is Mg(2+). In terms of processing, phosphorylated. Phosphorylation upon DNA damage induces relocalization to the nuclear plasma.

It is found in the nucleus. Its subcellular location is the nucleolus. The protein localises to the nucleoplasm. It localises to the mitochondrion. In terms of biological role, structure-specific nuclease with 5'-flap endonuclease and 5'-3' exonuclease activities involved in DNA replication and repair. During DNA replication, cleaves the 5'-overhanging flap structure that is generated by displacement synthesis when DNA polymerase encounters the 5'-end of a downstream Okazaki fragment. It enters the flap from the 5'-end and then tracks to cleave the flap base, leaving a nick for ligation. Also involved in the long patch base excision repair (LP-BER) pathway, by cleaving within the apurinic/apyrimidinic (AP) site-terminated flap. Acts as a genome stabilization factor that prevents flaps from equilibrating into structures that lead to duplications and deletions. Also possesses 5'-3' exonuclease activity on nicked or gapped double-stranded DNA, and exhibits RNase H activity. Also involved in replication and repair of rDNA and in repairing mitochondrial DNA. This is Flap endonuclease 1 from Cryptosporidium muris (strain RN66).